A 230-amino-acid chain; its full sequence is 3-beta-hydroxysteroid-Delta(8),Delta(7)-isomerase (230 aa).

Position 2 is an N-acetylthreonine (Thr2). 4 consecutive transmembrane segments (helical) span residues 29–49 (WHILVGLFSFSGVLIVITWLL), 66–86 (LCWFAVCTFIHLVIEGWFSFY), 121–141 (MESVTACLWGPLSLWVVIAFL), and 185–205 (FWFYFVIMNAIWLVIPGILVF). An EXPERA domain is found at 61–204 (GRRLALCWFA…IWLVIPGILV (144 aa)).

It belongs to the EBP family. As to expression, expressed in liver.

The protein resides in the endoplasmic reticulum membrane. Its subcellular location is the nucleus envelope. It is found in the cytoplasmic vesicle. The catalysed reaction is lathosterol = 5alpha-cholest-8-en-3beta-ol. It catalyses the reaction zymosterol = 5alpha-cholesta-7,24-dien-3beta-ol. It carries out the reaction 5,6alpha-epoxy-5alpha-cholestan-3beta-ol + H2O = 5alpha-cholestane-3beta,5,6beta-triol. The enzyme catalyses 5,6beta-epoxy-5beta-cholestan-3beta-ol + H2O = 5alpha-cholestane-3beta,5,6beta-triol. The protein operates within steroid biosynthesis; cholesterol biosynthesis. Its activity is regulated as follows. Enzymatic activity is induced by 25-hydroxycholesterol, cholestyramine and lovastatin. Its function is as follows. Isomerase that catalyzes the conversion of Delta(8)-sterols to their corresponding Delta(7)-isomers. Functionally, component of the microsomal antiestrogen binding site (AEBS), a multiproteic complex at the ER membrane that consists of an association between EBP and 7-dehydrocholesterol reductase/DHCR7. This complex is responsible for cholesterol-5,6-epoxide hydrolase (ChEH) activity, which consists in the hydration of cholesterol-5,6-epoxides (5,6-EC) into cholestane-3beta,5alpha,6beta-triol (CT). The precise role of each component of this complex has not been described yet. In Rattus norvegicus (Rat), this protein is 3-beta-hydroxysteroid-Delta(8),Delta(7)-isomerase.